Here is a 383-residue protein sequence, read N- to C-terminus: MSAPLKNSDPVTVDVALGDRSYDIVIGRGILPSLGERIAALRPGARVAIVTDEYVATHWLRATEASLLGAGIATSRIVVDEGEVSKSYEGIEFVCEELIKARIERNDLVVALGGGVVGDLAGFAAAIVRRGVDFVQVPTSLLAQVDSSVGGKTGINSPQGKNLVGAFHQPILVVADTAVLDTLSPRQFRAGYAEVAKYGLLGDEAFFAWLETNHADIVKGSAARESAVAASCRAKAAIVARDERETGERALLNLGHTFGHALETATGFSDRLYHGEGVSIGMVLAAELSAQLGMIADADVARIRRHLATAGLPTRLQDIAGFRQEGLADADGLMALMAQDKKVKRGRLTFILLQAIGQAVVSSDVEPSTVRDFLARKLADAPA.

Residues 81-86 (EGEVSK), 115-119 (GVVGD), 139-140 (TS), lysine 152, and lysine 161 each bind NAD(+). 3 residues coordinate Zn(2+): glutamate 194, histidine 256, and histidine 274.

The protein belongs to the sugar phosphate cyclases superfamily. Dehydroquinate synthase family. It depends on Co(2+) as a cofactor. The cofactor is Zn(2+). Requires NAD(+) as cofactor.

Its subcellular location is the cytoplasm. The catalysed reaction is 7-phospho-2-dehydro-3-deoxy-D-arabino-heptonate = 3-dehydroquinate + phosphate. It participates in metabolic intermediate biosynthesis; chorismate biosynthesis; chorismate from D-erythrose 4-phosphate and phosphoenolpyruvate: step 2/7. In terms of biological role, catalyzes the conversion of 3-deoxy-D-arabino-heptulosonate 7-phosphate (DAHP) to dehydroquinate (DHQ). This chain is 3-dehydroquinate synthase, found in Nitrobacter hamburgensis (strain DSM 10229 / NCIMB 13809 / X14).